The sequence spans 213 residues: ATP-dependent Clp protease proteolytic subunit (213 aa).

Ser-114 functions as the Nucleophile in the catalytic mechanism. His-139 is a catalytic residue.

The protein belongs to the peptidase S14 family. As to quaternary structure, fourteen ClpP subunits assemble into 2 heptameric rings which stack back to back to give a disk-like structure with a central cavity, resembling the structure of eukaryotic proteasomes.

The protein resides in the cytoplasm. It catalyses the reaction Hydrolysis of proteins to small peptides in the presence of ATP and magnesium. alpha-casein is the usual test substrate. In the absence of ATP, only oligopeptides shorter than five residues are hydrolyzed (such as succinyl-Leu-Tyr-|-NHMec, and Leu-Tyr-Leu-|-Tyr-Trp, in which cleavage of the -Tyr-|-Leu- and -Tyr-|-Trp bonds also occurs).. In terms of biological role, cleaves peptides in various proteins in a process that requires ATP hydrolysis. Has a chymotrypsin-like activity. Plays a major role in the degradation of misfolded proteins. This Pseudomonas entomophila (strain L48) protein is ATP-dependent Clp protease proteolytic subunit.